The sequence spans 477 residues: Metallopeptidase AprA (477 aa).

Residues 1–20 form the signal peptide; the sequence is MSKAKDKAIVSAAQASTAYS. His-183 contributes to the Zn(2+) binding site. Glu-184 is a catalytic residue. Zn(2+) contacts are provided by His-187 and His-193. Positions 264, 266, 268, 296, 298, 299, 301, 338, 340, 345, 347, 349, 354, 356, 358, 362, 363, 364, 365, 367, 371, 372, 373, 374, 376, 380, 381, 382, 383, 385, 394, 401, 411, 453, 455, and 461 each coordinate Ca(2+). Hemolysin-type calcium-binding repeat units lie at residues 343-360, 361-378, and 379-391; these read FGGAGNDLIIGNNAANVI, KGGAGNDLIYGAGGADQL, and WGGAGNDTFVFGA.

It belongs to the peptidase M10B family. Ca(2+) serves as cofactor. Zn(2+) is required as a cofactor.

It localises to the secreted. With respect to regulation, is completely inhibited by the metal cation chelators 1,10-phenanthroline and EDTA, but PMSF, pepstatin A and E-64 have no effect on activity. In terms of biological role, peptidase able to cleave azocasein and the milk substrates beta-casein and Na-caseinate. Can withstand UHT processing of milk, and is able to spoil UHT milk over the storage period. This is Metallopeptidase AprA from Pseudomonas marginalis (Pseudomonas panacis).